The sequence spans 294 residues: Shikimate dehydrogenase (NADP(+)) (294 aa).

Shikimate contacts are provided by residues 23-25 and T76; that span reads SRS. Residue K80 is the Proton acceptor of the active site. Positions 101 and 116 each coordinate shikimate. NADP(+)-binding positions include 141 to 145 and M233; that span reads GAGGA. Y235 lines the shikimate pocket. G256 is an NADP(+) binding site.

This sequence belongs to the shikimate dehydrogenase family. Homodimer.

The enzyme catalyses shikimate + NADP(+) = 3-dehydroshikimate + NADPH + H(+). The protein operates within metabolic intermediate biosynthesis; chorismate biosynthesis; chorismate from D-erythrose 4-phosphate and phosphoenolpyruvate: step 4/7. Its function is as follows. Involved in the biosynthesis of the chorismate, which leads to the biosynthesis of aromatic amino acids. Catalyzes the reversible NADPH linked reduction of 3-dehydroshikimate (DHSA) to yield shikimate (SA). This is Shikimate dehydrogenase (NADP(+)) from Methylibium petroleiphilum (strain ATCC BAA-1232 / LMG 22953 / PM1).